We begin with the raw amino-acid sequence, 275 residues long: Putative carbamate hydrolase RutD (275 aa).

One can recognise an AB hydrolase-1 domain in the interval 15 to 116 (TVVLSSGLGG…SLVVINGWTV (102 aa)).

Belongs to the AB hydrolase superfamily. Hydrolase RutD family.

It catalyses the reaction carbamate + 2 H(+) = NH4(+) + CO2. In terms of biological role, involved in pyrimidine catabolism. May facilitate the hydrolysis of carbamate, a reaction that can also occur spontaneously. This chain is Putative carbamate hydrolase RutD, found in Pantoea ananatis (strain LMG 20103).